A 1381-amino-acid polypeptide reads, in one-letter code: Major capsid protein (1381 aa).

It belongs to the herpesviridae major capsid protein family. As to quaternary structure, homomultimer. Makes the hexons and eleven out of twelve pentons. Interacts with triplex proteins 1/TRX1 and 2/TRX2; adjacent capsomers are linked together in groups of three by triplexes, heterotrimeric complexes composed of one molecule of TRX1 and two molecules of TRX2. Interacts with scaffold protein; this interaction allows efficient MCP transport to the host nucleus. Interacts with capsid vertex component 2/CVC2. Interacts with the small capsomere-interacting protein/SCP.

It is found in the virion. The protein resides in the host nucleus. Its function is as follows. Self-assembles to form an icosahedral capsid with a T=16 symmetry, about 200 nm in diameter, and consisting of 150 hexons and 12 pentons (total of 162 capsomers). Hexons form the edges and faces of the capsid and are each composed of six MCP molecules. In contrast, one penton is found at each of the 12 vertices. Eleven of the pentons are MCP pentamers, while the last vertex is occupied by the portal complex. The capsid is surrounded by a layer of proteinaceous material designated the tegument which, in turn, is enclosed in an envelope of host cell-derived lipids containing virus-encoded glycoproteins. This chain is Major capsid protein, found in Epstein-Barr virus (strain AG876) (HHV-4).